The chain runs to 255 residues: Malonyl-[acyl-carrier protein] O-methyltransferase (255 aa).

Belongs to the methyltransferase superfamily.

It carries out the reaction malonyl-[ACP] + S-adenosyl-L-methionine = malonyl-[ACP] methyl ester + S-adenosyl-L-homocysteine. It functions in the pathway cofactor biosynthesis; biotin biosynthesis. Converts the free carboxyl group of a malonyl-thioester to its methyl ester by transfer of a methyl group from S-adenosyl-L-methionine (SAM). It allows to synthesize pimeloyl-ACP via the fatty acid synthetic pathway. In Serratia marcescens, this protein is Malonyl-[acyl-carrier protein] O-methyltransferase.